The primary structure comprises 876 residues: Alanine--tRNA ligase (876 aa).

Zn(2+) is bound by residues His-568, His-572, Cys-670, and His-674.

It belongs to the class-II aminoacyl-tRNA synthetase family. Zn(2+) is required as a cofactor.

It localises to the cytoplasm. The catalysed reaction is tRNA(Ala) + L-alanine + ATP = L-alanyl-tRNA(Ala) + AMP + diphosphate. In terms of biological role, catalyzes the attachment of alanine to tRNA(Ala) in a two-step reaction: alanine is first activated by ATP to form Ala-AMP and then transferred to the acceptor end of tRNA(Ala). Also edits incorrectly charged Ser-tRNA(Ala) and Gly-tRNA(Ala) via its editing domain. The polypeptide is Alanine--tRNA ligase (Anaplasma phagocytophilum (strain HZ)).